Reading from the N-terminus, the 302-residue chain is Sulfate adenylyltransferase subunit 2 (302 aa).

It belongs to the PAPS reductase family. CysD subfamily. Heterodimer composed of CysD, the smaller subunit, and CysN.

The enzyme catalyses sulfate + ATP + H(+) = adenosine 5'-phosphosulfate + diphosphate. It participates in sulfur metabolism; hydrogen sulfide biosynthesis; sulfite from sulfate: step 1/3. In terms of biological role, with CysN forms the ATP sulfurylase (ATPS) that catalyzes the adenylation of sulfate producing adenosine 5'-phosphosulfate (APS) and diphosphate, the first enzymatic step in sulfur assimilation pathway. APS synthesis involves the formation of a high-energy phosphoric-sulfuric acid anhydride bond driven by GTP hydrolysis by CysN coupled to ATP hydrolysis by CysD. The chain is Sulfate adenylyltransferase subunit 2 from Bacteroides thetaiotaomicron (strain ATCC 29148 / DSM 2079 / JCM 5827 / CCUG 10774 / NCTC 10582 / VPI-5482 / E50).